Here is a 93-residue protein sequence, read N- to C-terminus: Bacterial microcompartment shell protein PduA (93 aa).

One can recognise a BMC domain in the interval 5-89; it reads ALGMVETKGL…PHTDVEKILP (85 aa).

Belongs to the bacterial microcompartments protein family. In terms of assembly, homohexamer with a central pore; Lys-26 and Arg-79 interactions are very important for hexamer symmetry. The hexamers pack against each other in arrays. Interacts individually with shell proteins PduB, PduB', PduJ, PduK, PduN and PduU. Modeling suggests PduC, PduD, PduE, PduL and PduP interact with a cleft formed by the C-terminal segments of 2 adjacent PduA subunits (on the BMC luminal side) in the hexamer.

It localises to the bacterial microcompartment. It participates in polyol metabolism; 1,2-propanediol degradation. Functionally, one of the major shell proteins of the bacterial microcompartment (BMC) dedicated to 1,2-propanediol (1,2-PD) degradation, probably important for metabolite diffusion into and out of the BMC. Overexpression of a C-terminally mutated form (PduA*) makes thin parallel filaments with a honeycomb-like assembly in cross-section that probably form nanotubes. The filaments interfere with septation. PduA is probably the hub for binding multiple enzymes to the interior of the BMC. At least one of PduA or PduJ is required for BMC assembly; it must be encoded as the first gene in the pdu operon. Expression of a cosmid containing the full 21-gene pdu operon in E.coli allows E.coli to grow on 1,2-PD with the appearance of BMCs in its cytoplasm. Overexpression of this protein leads to aberrant intracellular filaments. Its function is as follows. The 1,2-PD-specific bacterial microcompartment (BMC) concentrates low levels of 1,2-PD catabolic enzymes, concentrates volatile reaction intermediates thus enhancing pathway flux and keeps the level of toxic, mutagenic propionaldehyde low. In Citrobacter freundii, this protein is Bacterial microcompartment shell protein PduA.